Reading from the N-terminus, the 582-residue chain is Actin-histidine N-methyltransferase (582 aa).

Residues Arg75, 104 to 106 (EGF), Arg254, 275 to 279 (DMCNH), and 325 to 327 (NGF) each bind S-adenosyl-L-methionine. The 221-residue stretch at 94–314 (DGFELVEFPE…SGEQIYIFYG (221 aa)) folds into the SET domain. A disordered region spans residues 550–582 (DKDLLPNGTKSENDSFLAEDNQQETGNAKDFCS).

It belongs to the class V-like SAM-binding methyltransferase superfamily. SETD3 actin-histidine methyltransferase family.

It is found in the cytoplasm. It catalyses the reaction L-histidyl-[protein] + S-adenosyl-L-methionine = N(tele)-methyl-L-histidyl-[protein] + S-adenosyl-L-homocysteine + H(+). Functionally, protein-histidine N-methyltransferase that specifically mediates 3-methylhistidine (tele-methylhistidine) methylation of actin at 'His-73'. Does not have protein-lysine N-methyltransferase activity and probably only catalyzes histidine methylation of actin. The polypeptide is Actin-histidine N-methyltransferase (Xenopus tropicalis (Western clawed frog)).